The chain runs to 339 residues: Ketol-acid reductoisomerase (NADP(+)) (339 aa).

Positions 1-182 constitute a KARI N-terminal Rossmann domain; it reads MRVYYDRDAD…GGGRSGIIET (182 aa). Residues 24-27, Arg48, Ser51, Ser53, and 83-86 contribute to the NADP(+) site; these read YGSQ and DELQ. The active site involves His108. Position 134 (Gly134) interacts with NADP(+). The region spanning 183 to 328 is the KARI C-terminal knotted domain; the sequence is TFREECETDL…EKLRAMMPWI (146 aa). Residues Asp191, Glu195, Glu227, and Glu231 each contribute to the Mg(2+) site. Ser252 provides a ligand contact to substrate.

The protein belongs to the ketol-acid reductoisomerase family. It depends on Mg(2+) as a cofactor.

It carries out the reaction (2R)-2,3-dihydroxy-3-methylbutanoate + NADP(+) = (2S)-2-acetolactate + NADPH + H(+). The catalysed reaction is (2R,3R)-2,3-dihydroxy-3-methylpentanoate + NADP(+) = (S)-2-ethyl-2-hydroxy-3-oxobutanoate + NADPH + H(+). It functions in the pathway amino-acid biosynthesis; L-isoleucine biosynthesis; L-isoleucine from 2-oxobutanoate: step 2/4. Its pathway is amino-acid biosynthesis; L-valine biosynthesis; L-valine from pyruvate: step 2/4. Involved in the biosynthesis of branched-chain amino acids (BCAA). Catalyzes an alkyl-migration followed by a ketol-acid reduction of (S)-2-acetolactate (S2AL) to yield (R)-2,3-dihydroxy-isovalerate. In the isomerase reaction, S2AL is rearranged via a Mg-dependent methyl migration to produce 3-hydroxy-3-methyl-2-ketobutyrate (HMKB). In the reductase reaction, this 2-ketoacid undergoes a metal-dependent reduction by NADPH to yield (R)-2,3-dihydroxy-isovalerate. The polypeptide is Ketol-acid reductoisomerase (NADP(+)) (Chelativorans sp. (strain BNC1)).